Consider the following 395-residue polypeptide: Inactive serine protease 54 (395 aa).

A signal peptide spans 1–30; it reads MVSAAGLSGDGKMRGVLLVLLGLLYSSTSC. The region spanning 37–269 is the Peptidase S1 domain; the sequence is VFYGPDPKEG…YSKWITSKAE (233 aa). The N-linked (GlcNAc...) asparagine glycan is linked to Asn123. 3 disulfide bridges follow: Cys164–Cys227, Cys195–Cys205, and Cys217–Cys248. A disordered region spans residues 324-348; the sequence is RLGNSSRDSLDVREKDVKESGRSPE. Asn327 carries N-linked (GlcNAc...) asparagine glycosylation. Residues 331–345 are compositionally biased toward basic and acidic residues; that stretch reads DSLDVREKDVKESGR.

It belongs to the peptidase S1 family. Plasma kallikrein subfamily.

The protein resides in the secreted. The protein is Inactive serine protease 54 (PRSS54) of Homo sapiens (Human).